Consider the following 201-residue polypeptide: Small ribosomal subunit protein uS4 (201 aa).

Positions 93-153 (QRLDNIVYRL…EKSKNLVIIK (61 aa)) constitute an S4 RNA-binding domain.

The protein belongs to the universal ribosomal protein uS4 family. Part of the 30S ribosomal subunit. Contacts protein S5. The interaction surface between S4 and S5 is involved in control of translational fidelity.

Its function is as follows. One of the primary rRNA binding proteins, it binds directly to 16S rRNA where it nucleates assembly of the body of the 30S subunit. In terms of biological role, with S5 and S12 plays an important role in translational accuracy. The protein is Small ribosomal subunit protein uS4 of Latilactobacillus sakei subsp. sakei (strain 23K) (Lactobacillus sakei subsp. sakei).